Reading from the N-terminus, the 180-residue chain is Large ribosomal subunit protein uL6 (180 aa).

The protein belongs to the universal ribosomal protein uL6 family. As to quaternary structure, part of the 50S ribosomal subunit.

This protein binds to the 23S rRNA, and is important in its secondary structure. It is located near the subunit interface in the base of the L7/L12 stalk, and near the tRNA binding site of the peptidyltransferase center. This chain is Large ribosomal subunit protein uL6, found in Picrophilus torridus (strain ATCC 700027 / DSM 9790 / JCM 10055 / NBRC 100828 / KAW 2/3).